The sequence spans 320 residues: Peptidase 1 (320 aa).

The signal sequence occupies residues M1–A18. Positions R19 to E98 are cleaved as a propeptide — activation peptide. Cystine bridges form between C102–C215, C129–C169, and C163–C201. The active site involves C132. N-linked (GlcNAc...) asparagine glycosylation is present at N150. Active-site residues include H268 and N288.

Belongs to the peptidase C1 family. N-glycosylated. N-glycanase treatment does not completely remove carbohydrates, suggesting that the protein contains additional glycosylation sites.

The protein resides in the secreted. It catalyses the reaction Broad endopeptidase specificity.. Thiol protease, with a preference for substrates with a large hydrophobic side chain in the P2 position, or with basic residues. This chain is Peptidase 1 (DERP1), found in Dermatophagoides pteronyssinus (European house dust mite).